The sequence spans 78 residues: uncharacterized protein (78 aa).

Residues 1-22 form the signal peptide; sequence MFKKSVLFATLLSGVMAFSTNA.

This sequence belongs to the BhsA/McbA family.

It is found in the periplasm. Functionally, probably involved in reactive chlorine species (RCS) stress resistance. This is an uncharacterized protein from Escherichia coli (strain K12).